The chain runs to 204 residues: Large ribosomal subunit protein uL4 (204 aa).

A disordered region spans residues 49-75; that stretch reads TKGRSDVSGGGKKPWRQKGRGGARAGS.

This sequence belongs to the universal ribosomal protein uL4 family. As to quaternary structure, part of the 50S ribosomal subunit.

In terms of biological role, one of the primary rRNA binding proteins, this protein initially binds near the 5'-end of the 23S rRNA. It is important during the early stages of 50S assembly. It makes multiple contacts with different domains of the 23S rRNA in the assembled 50S subunit and ribosome. Functionally, forms part of the polypeptide exit tunnel. In Campylobacter lari (strain RM2100 / D67 / ATCC BAA-1060), this protein is Large ribosomal subunit protein uL4.